A 543-amino-acid chain; its full sequence is Headcase protein homolog (543 aa).

Disordered regions lie at residues 1–26 (MPNP…QENG) and 197–283 (MQDE…LSPA). 2 stretches are compositionally biased toward basic and acidic residues: residues 197-211 (MQDE…EKNT) and 235-250 (PSHD…RQNS). Ser-264 and Ser-268 each carry phosphoserine.

As to expression, expressed in all tissues examined. Highest levels are in the spleen, thymus, peripheral blood and heart. Lowest in the kidney and pancreas.

Its function is as follows. May play an important role in some human cancers. May be part of the regulatory mechanism in the development of epithelial tube networks such as the circulatory system and lungs. This chain is Headcase protein homolog (HECA), found in Homo sapiens (Human).